Here is a 65-residue protein sequence, read N- to C-terminus: Large ribosomal subunit protein bL35 (65 aa).

This sequence belongs to the bacterial ribosomal protein bL35 family.

The sequence is that of Large ribosomal subunit protein bL35 from Nostoc sp. (strain PCC 7120 / SAG 25.82 / UTEX 2576).